Reading from the N-terminus, the 144-residue chain is Cytochrome c-type biogenesis protein CcmE (144 aa).

Residues 1–7 (MKPRHKR) lie on the Cytoplasmic side of the membrane. The helical; Signal-anchor for type II membrane protein transmembrane segment at 8–28 (ALIIIAALIAIGVAALLILNA) threads the bilayer. The Periplasmic portion of the chain corresponds to 29–144 (LNSNIALYVT…DQAQKNGSAK (116 aa)). 2 residues coordinate heme: His-121 and Tyr-125.

Belongs to the CcmE/CycJ family.

It is found in the cell inner membrane. Functionally, heme chaperone required for the biogenesis of c-type cytochromes. Transiently binds heme delivered by CcmC and transfers the heme to apo-cytochromes in a process facilitated by CcmF and CcmH. This is Cytochrome c-type biogenesis protein CcmE from Polynucleobacter necessarius subsp. necessarius (strain STIR1).